Here is a 329-residue protein sequence, read N- to C-terminus: Ficolin-2 (329 aa).

The N-terminal stretch at 1-29 (MELGGAAGALGPSGPLLVCLCFGTLAAQA) is a signal peptide. One can recognise a Collagen-like domain in the interval 52–111 (GCPGLPGAPGLKGETGAAGLKGERGLPGVPGKAGPAGPKGSTGAQGEKGARGEKGESGQL). The interval 64-113 (GETGAAGLKGERGLPGVPGKAGPAGPKGSTGAQGEKGARGEKGESGQLHS) is disordered. The span at 77–90 (LPGVPGKAGPAGPK) shows a compositional bias: low complexity. The 218-residue stretch at 112-329 (HSCATGPRTC…KVSEMKLRLT (218 aa)) folds into the Fibrinogen C-terminal domain. 2 disulfides stabilise this stretch: C114/C142 and C121/C149. Ca(2+) contacts are provided by D265, D267, S269, and S271. A disulfide bond links C273 and C286. N-linked (GlcNAc...) asparagine glycosylation occurs at N316.

Belongs to the ficolin lectin family. In terms of assembly, homotrimer. Interacts with elastin. Interacts with MASP1 and MASP2.

The protein localises to the secreted. May function in innate immunity through activation of the lectin complement pathway. Calcium-dependent and GlcNAc-binding lectin. This Bos taurus (Bovine) protein is Ficolin-2 (FCN2).